We begin with the raw amino-acid sequence, 166 residues long: Bile acid 7alpha-dehydratase (166 aa).

Homodimer.

The catalysed reaction is 7alpha,12alpha-dihydroxy-3-oxochol-4-en-24-oyl-CoA = 12alpha-hydroxy-3-oxochola-4,6-dien-24-oyl-CoA + H2O. It carries out the reaction 7alpha-hydroxy-3-oxochol-4-en-24-oyl-CoA = 3-oxochol-4,6-dien-24-oyl-CoA + H2O. The enzyme catalyses 7alpha,12alpha-dihydroxy-3-oxochol-4-en-24-oate = 12alpha-hydroxy-3-oxochola-4,6-dien-24-oate + H2O. It catalyses the reaction 7alpha-hydroxy-3-oxochol-4-en-24-oate = 3-oxochola-4,6-dien-24-oate + H2O. It participates in lipid metabolism; bile acid biosynthesis. Its function is as follows. Functions in the bile acid 7alpha-dehydroxylation pathway, which forms secondary bile acids via the 7alpha-dehydroxylation of primary bile acids, and is carried out by intestinal anaerobic bacteria. Catalyzes the dehydration step in this pathway, yielding a 3-oxo-Delta(4,6)-bile acid-CoA intermediate. In vitro, can act on the free bile acids (non CoA-conjugated) 7-alpha,12-alpha-dihydroxy-3-oxochol-4-enoate and 7-alpha-hydroxy-3-oxochol-4-enoate, but not on 7-alpha,12-alpha-dihydroxy-3-oxo-5-beta-cholanate, 3-alpha,7-alpha,12-alpha-trihydroxy-5-beta-cholanate or 7-beta-hydroxy-3-oxochol-4-enoate. In Clostridium scindens (strain JCM 10418 / VPI 12708), this protein is Bile acid 7alpha-dehydratase.